Here is a 528-residue protein sequence, read N- to C-terminus: MTVDALTQPHHLLSLAWNDTQQHGSWFAPLVTTSAGLLCLLLYLCSSGRRSDLPVFNPKTWWELTTMRAKRDFDANAPSWIESWFSQNDKPIRFIVDSGYCTILPSSMADEFRKMKELCMYKFLGTDFHSHLPGFDGFKEVTRDAHLITKVVMNQFQTQAPKYVKPLANEASGIITDIFGDSNEWHTVPVYNQCLDLVTRTVTFIMVGSKLAHNEEWLDIAKHHAVTMAIQARQLRLWPVILRPLVHWLEPQGAKLRAQVRRARQLLDPIIQERRAERDACRAKGIEPPRYVDSIQWFEDTAKGKWYDAAGAQLAMDFAGIYGTSDLLIGGLVDIVRHPHLLEPLRDEIRTVIGQGGWTPASLYKLKLLDSCLKESQRVKPVECATMRSYALQDVTFSNGTFIPKGELVAVAADRMSNPEVWPEPAKYDPYRYMRLREDPAKAFSAQLENTNGDHIGFGWHPRACPGRFFASKEIKMMLAYLLIRYDWKVVPDEPLQYYRHSFSVRIHPTTKLMMRRRDEDIRLPGSL.

Over 1–23 (MTVDALTQPHHLLSLAWNDTQQH) the chain is Cytoplasmic. A helical; Signal-anchor for type II membrane protein membrane pass occupies residues 24–44 (GSWFAPLVTTSAGLLCLLLYL). Over 45–528 (CSSGRRSDLP…DEDIRLPGSL (484 aa)) the chain is Lumenal. C465 contacts heme.

It belongs to the cytochrome P450 family. Requires heme as cofactor.

The protein resides in the membrane. It localises to the endoplasmic reticulum membrane. It catalyses the reaction dihydromonacolin L carboxylate + reduced [NADPH--hemoprotein reductase] + O2 = monacolin L carboxylate + oxidized [NADPH--hemoprotein reductase] + 2 H2O + H(+). It carries out the reaction monacolin L carboxylate + reduced [NADPH--hemoprotein reductase] + O2 = monacolin J carboxylate + oxidized [NADPH--hemoprotein reductase] + H2O + H(+). It functions in the pathway polyketide biosynthesis; lovastatin biosynthesis. Functionally, dihydromonacolin L monooxygenase; part of the gene cluster that mediates the biosynthesis of lovastatin (also known as mevinolin, mevacor or monacolin K), a hypolipidemic inhibitor of (3S)-hydroxymethylglutaryl-coenzyme A (HMG-CoA) reductase (HMGR). The first step in the biosynthesis of lovastatin is the production of dihydromonacolin L acid by the lovastatin nonaketide synthase lovB and the trans-acting enoyl reductase lovC via condensation of one acetyl-CoA unit and 8 malonyl-CoA units. Dihydromonacolin L acid is released from lovB by the thioesterase lovG. Next, dihydromonacolin L acid is oxidized by the dihydromonacolin L monooxygenase lovA twice to form monacolin J acid. The 2-methylbutyrate moiety of lovastatin is synthesized by the lovastatin diketide synthase lovF via condensation of one acetyl-CoA unit and one malonyl-CoA unit. Finally, the covalent attachment of this moiety to monacolin J acid is catalyzed by the transesterase lovD to yield lovastatin. LovD has broad substrate specificity and can also convert monacolin J to simvastatin using alpha-dimethylbutanoyl-S-methyl-3-mercaptopropionate (DMB-S-MMP) as the thioester acyl donor, and can also catalyze the reverse reaction and function as hydrolase in vitro. LovD has much higher activity with LovF-bound 2-methylbutanoate than with free diketide substrates. The sequence is that of Dihydromonacolin L monooxygenase LovA from Aspergillus terreus.